The primary structure comprises 521 residues: Glucose-1-phosphate adenylyltransferase large subunit 2, chloroplastic/amyloplastic (521 aa).

Residues 1–47 (MQFSSVLPLEGKACMSPVRRGSGGYGSERMRINCCSIRRNKALRRMC) constitute a chloroplast transit peptide.

This sequence belongs to the bacterial/plant glucose-1-phosphate adenylyltransferase family. As to quaternary structure, heterotetramer. As to expression, abundant in the embryo and is also present in the endosperm.

It localises to the plastid. The protein localises to the chloroplast. The protein resides in the amyloplast. The enzyme catalyses alpha-D-glucose 1-phosphate + ATP + H(+) = ADP-alpha-D-glucose + diphosphate. It functions in the pathway glycan biosynthesis; starch biosynthesis. With respect to regulation, activated by 3'phosphoglycerate, inhibited by orthophosphate. Allosteric regulation. In terms of biological role, this protein plays a role in synthesis of starch. It catalyzes the synthesis of the activated glycosyl donor, ADP-glucose from Glc-1-P and ATP. This Zea mays (Maize) protein is Glucose-1-phosphate adenylyltransferase large subunit 2, chloroplastic/amyloplastic (AGP2).